The sequence spans 705 residues: Gamma-adducin (705 aa).

Residues 1 to 10 (MSSDTSQAVI) are compositionally biased toward polar residues. Residues 1 to 22 (MSSDTSQAVITTPPPPSMPHKE) are disordered. Ser-2 carries the N-acetylserine modification. Residues Ser-31, Ser-42, Ser-64, Ser-402, Ser-414, Ser-423, Ser-442, and Ser-461 each carry the phosphoserine modification. Disordered regions lie at residues 472–495 (EDPS…VPLN), 535–556 (PSTM…PFSH), 572–612 (KQQG…EENH), and 658–705 (EITI…KVEA). A Glycyl lysine isopeptide (Lys-Gly) (interchain with G-Cter in SUMO2) cross-link involves residue Lys-484. Phosphoserine occurs at positions 583, 585, 590, 672, 676, 678, and 680. Residues 590–605 (SVSQIQSQTQSPQSVP) are compositionally biased toward low complexity. Residues 681 to 705 (PSKKKKKFRTPSFLKKNKKKEKVEA) show a composition bias toward basic residues. Ser-682 carries the phosphoserine; by PKC modification. The segment at 683-700 (KKKKKFRTPSFLKKNKKK) is interaction with calmodulin.

Belongs to the aldolase class II family. Adducin subfamily. Heterodimer of an alpha and a gamma subunit. Post-translationally, sumoylated. Proteolytically cleaved by asparagine endopeptidase (AEP) into 2 fragments. Overexpression of the 1-357 fragment induces neuronal apoptosis, and overexpression of either 1-357 or 358-706 fragment increases the degeneration of dendritic spines. Overexpression of the 1-357 fragment impairs neurite outgrowth by downregulating the expression of Rac2, and induces synaptic dysfunction and cognitive impairments in tau P301S transgenic mice, a mouse model for Alzheimer disease (AD). As to expression, expressed in kidney, brain, spleen, liver and heart. In terms of tissue distribution, expressed in renal interlobular arteries, afferent/efferent arterioles, parietal glomerular epithelial cells and microvilli of the luminal surface of the proximal tubule (at protein level). Expressed in podocytes (at protein level) Expressed in renal cortex (at protein level). Expressed in primary vascular smooth muscle cells (VSMCs) of the kidney (at protein level). Expressed in tubular cells and glomeruli (at protein level).

The protein localises to the cytoplasm. Its subcellular location is the cytoskeleton. It is found in the cell membrane. In terms of biological role, membrane-cytoskeleton-associated protein that promotes the assembly of the spectrin-actin network. Plays a role in actin filament capping. Binds to calmodulin. Involved in myogenic reactivity of the renal afferent arteriole (Af-art), renal interlobular arteries and middle cerebral artery (MCA) to increased perfusion pressure. Involved in regulation of potassium channels in the vascular smooth muscle cells (VSMCs) of the Af-art and MCA ex vivo. Involved in regulation of glomerular capillary pressure, glomerular filtration rate (GFR) and glomerular nephrin expression in response to hypertension. Involved in renal blood flow (RBF) autoregulation. Plays a role in podocyte structure and function. Regulates globular monomer actin (G-actin) and filamentous polymer actin (F-actin) ratios in the primary podocytes affecting actin cytoskeleton organization. Regulates expression of synaptopodin, RhoA, Rac1 and CDC42 in the renal cortex and the primary podocytes. Regulates expression of nephrin in the glomeruli and in the primary podocytes, expression of nephrin and podocinin in the renal cortex, and expression of focal adhesion proteins integrin alpha-3 and integrin beta-1 in the glomeruli. Involved in cell migration and cell adhesion of podocytes, and in podocyte foot process effacement. Regulates expression of profibrotics markers MMP2, MMP9, TGF beta-1, tubular tight junction protein E-cadherin, and mesenchymal markers vimentin and alpha-SMA. Promotes the growth of neurites. The polypeptide is Gamma-adducin (Add3) (Rattus norvegicus (Rat)).